The sequence spans 369 residues: tRNA 2-selenouridine synthase (369 aa).

Residues Phe-12–Arg-136 enclose the Rhodanese domain. Cys-95 serves as the catalytic S-selanylcysteine intermediate.

Belongs to the SelU family. As to quaternary structure, monomer.

It catalyses the reaction 5-methylaminomethyl-2-thiouridine(34) in tRNA + selenophosphate + (2E)-geranyl diphosphate + H2O + H(+) = 5-methylaminomethyl-2-selenouridine(34) in tRNA + (2E)-thiogeraniol + phosphate + diphosphate. It carries out the reaction 5-methylaminomethyl-2-thiouridine(34) in tRNA + (2E)-geranyl diphosphate = 5-methylaminomethyl-S-(2E)-geranyl-thiouridine(34) in tRNA + diphosphate. The enzyme catalyses 5-methylaminomethyl-S-(2E)-geranyl-thiouridine(34) in tRNA + selenophosphate + H(+) = 5-methylaminomethyl-2-(Se-phospho)selenouridine(34) in tRNA + (2E)-thiogeraniol. The catalysed reaction is 5-methylaminomethyl-2-(Se-phospho)selenouridine(34) in tRNA + H2O = 5-methylaminomethyl-2-selenouridine(34) in tRNA + phosphate. Functionally, involved in the post-transcriptional modification of the uridine at the wobble position (U34) of tRNA(Lys), tRNA(Glu) and tRNA(Gln). Catalyzes the conversion of 2-thiouridine (S2U-RNA) to 2-selenouridine (Se2U-RNA). Acts in a two-step process involving geranylation of 2-thiouridine (S2U) to S-geranyl-2-thiouridine (geS2U) and subsequent selenation of the latter derivative to 2-selenouridine (Se2U) in the tRNA chain. The polypeptide is tRNA 2-selenouridine synthase (Pseudomonas aeruginosa (strain LESB58)).